A 545-amino-acid polypeptide reads, in one-letter code: Chaperonin GroEL (545 aa).

ATP-binding positions include 29-32 (TLGP), lysine 50, 86-90 (DGTTT), glycine 415, and aspartate 495.

Belongs to the chaperonin (HSP60) family. Forms a cylinder of 14 subunits composed of two heptameric rings stacked back-to-back. Interacts with the co-chaperonin GroES.

The protein resides in the cytoplasm. It catalyses the reaction ATP + H2O + a folded polypeptide = ADP + phosphate + an unfolded polypeptide.. Functionally, together with its co-chaperonin GroES, plays an essential role in assisting protein folding. The GroEL-GroES system forms a nano-cage that allows encapsulation of the non-native substrate proteins and provides a physical environment optimized to promote and accelerate protein folding. The protein is Chaperonin GroEL of Bacteroides fragilis (strain ATCC 25285 / DSM 2151 / CCUG 4856 / JCM 11019 / LMG 10263 / NCTC 9343 / Onslow / VPI 2553 / EN-2).